Reading from the N-terminus, the 439-residue chain is GTPase Der (439 aa).

EngA-type G domains are found at residues 4 to 168 (PIVA…KDDE) and 177 to 352 (INIA…DNYT). GTP-binding positions include 10–17 (GRPNVGKS), 57–61 (DTGGI), 120–123 (NKID), 183–190 (GKPNVGKS), 230–234 (DTAGL), and 295–298 (NKWD). The KH-like domain occupies 353–437 (KRVKTGVLND…GIKLEFRERK (85 aa)).

Belongs to the TRAFAC class TrmE-Era-EngA-EngB-Septin-like GTPase superfamily. EngA (Der) GTPase family. In terms of assembly, associates with the 50S ribosomal subunit.

Functionally, GTPase that plays an essential role in the late steps of ribosome biogenesis. The polypeptide is GTPase Der (Clostridium botulinum (strain Langeland / NCTC 10281 / Type F)).